The chain runs to 765 residues: MATDLSVIMILTFALWVTSPLHELQSTAAFSQTTEKINSNWEPGVNVDLAVTMQRHHLQQLFYRYGENDSLSVEGFRKLLQNIGIDKIKRVHIHHDHEHHADHEHHSDHEHHSDHEHHSDHEHHSDHEHHSDHEHHSHRSHTVAGKNNRKAFCPDLDSDNSGKNPRTSLGKGSRPAEHMNGRRNIKESASSSEVTSAVYNAVSEGTRFVETIETPKPGRRTKDVNPSTPPSITEKSRVGRLSRLARKKSNESVSEPRKSFMYSRNTNDNIQECFNTTKLLTSHGMSIQALLNATEFNYLCPAIINQIDARACLIHTASEKKAEIPPKTYSLQIAWLGGFIAISIISFLSLLGVILVPLMNRVFFKFLLSFLVALAVGTLSGDALLHLLPHSHASHQHSHSHEEPAMEMKRGPLFSHLSAQNIEESSYFDSTWKGLTALGGLYFMFLVEHVLTLIKQFKDKKKKNQKKPENDEDVESKKQLSKYDSQLSSNEEKVDPGERPESYLRADSQEPSPFDSQQPTMLEEEEVMIAHAHPQEVYNEYVPRGCKNKCHSHFHDTLGQSDDLIHHHHDYHHILHHHHHQNHHPHSHSQRYSREELKDAGIATLAWMVIMGDGLHNFSDGLAIGAAFTEGLSSGLSTSVAVFCHELPHELGDFAVLLKAGMTVKQAVLYNALSAMLAYLGMATGIFIGHYAENVSMWIFALTAGLFMYVALVDMVPEMLHNDASDHGCSRWGYFFLQNAGILLGFGIMLLISIFEHKIVFRINF.

Positions 1–20 are cleaved as a signal peptide; that stretch reads MATDLSVIMILTFALWVTSP. At 21-335 the chain is on the extracellular side; the sequence is LHELQSTAAF…PKTYSLQIAW (315 aa). N-linked (GlcNAc...) asparagine glycosylation occurs at Asn68. 2 stretches are compositionally biased toward basic and acidic residues: residues 96-135 and 174-186; these read DHEH…DHEH and RPAE…RNIK. Disordered regions lie at residues 96-196 and 209-257; these read DHEH…EVTS and VETI…SEPR. Positions 187–196 are enriched in low complexity; sequence ESASSSEVTS. Over residues 224–233 the composition is skewed to polar residues; sequence VNPSTPPSIT. Residues 238 to 247 are compositionally biased toward basic residues; sequence VGRLSRLARK. The span at 248–257 shows a compositional bias: basic and acidic residues; sequence KSNESVSEPR. Residues Asn250, Asn275, and Asn292 are each glycosylated (N-linked (GlcNAc...) asparagine). A helical transmembrane segment spans residues 336-356; sequence LGGFIAISIISFLSLLGVILV. Over 357–365 the chain is Cytoplasmic; sequence PLMNRVFFK. The chain crosses the membrane as a helical span at residues 366–386; sequence FLLSFLVALAVGTLSGDALLH. Topologically, residues 387–433 are extracellular; it reads LLPHSHASHQHSHSHEEPAMEMKRGPLFSHLSAQNIEESSYFDSTWK. A helical transmembrane segment spans residues 434–454; the sequence is GLTALGGLYFMFLVEHVLTLI. The Cytoplasmic portion of the chain corresponds to 455–667; that stretch reads KQFKDKKKKN…LKAGMTVKQA (213 aa). Positions 458–519 are disordered; it reads KDKKKKNQKK…EPSPFDSQQP (62 aa). Residues 475–495 are a coiled coil; sequence ESKKQLSKYDSQLSSNEEKVD. A phosphoserine mark is found at Ser481 and Ser488. Residues 490–508 are compositionally biased toward basic and acidic residues; that stretch reads NEEKVDPGERPESYLRADS. Residues 509–519 are compositionally biased toward polar residues; that stretch reads QEPSPFDSQQP. The helical transmembrane segment at 668–688 threads the bilayer; the sequence is VLYNALSAMLAYLGMATGIFI. Topologically, residues 689–696 are extracellular; that stretch reads GHYAENVS. Residue Asn694 is glycosylated (N-linked (GlcNAc...) asparagine). The helical transmembrane segment at 697-717 threads the bilayer; sequence MWIFALTAGLFMYVALVDMVP. Topologically, residues 718–734 are cytoplasmic; that stretch reads EMLHNDASDHGCSRWGY. The chain crosses the membrane as a helical span at residues 735–755; the sequence is FFLQNAGILLGFGIMLLISIF. Residues 756-765 lie on the Extracellular side of the membrane; that stretch reads EHKIVFRINF.

The protein belongs to the ZIP transporter (TC 2.A.5) family. As to quaternary structure, interacts with SLC39A10; which triggers cells to undergo EMT and mitosis. Found in a complex with SLC39A6, SLC39A10 and with the 'Ser-727' phosphorylated form of STAT3 throughout mitosis. Found in a complex with SLC39A6, SLC39A10 and with NCAM1; this complex controls NCAM1 phosphorylation and integration into focal adhesion complexes during epithelial-to-mesenchymal transition (EMT). Found in a complex with SLC39A6, SLC39A10 and with GSK3B that controls NCAM1 phosphorylation. In terms of processing, cleaved on the N-terminus before locating to the plasma membrane. N-glycosylated. Post-translationally, phosphorylated by ZAP70 in response to TCR stimulation leading to its activation. In terms of tissue distribution, highly expressed in the brain and testis. In the brain strongly expressed in the CA1 and CA3 regions, Purkinje cells in cerebellum and dentate gyrus in hippocampus. In testis found in spermatids or mature sperms in the central areas of seminiferous tubules.

It is found in the cell membrane. The protein localises to the cell projection. It localises to the lamellipodium membrane. The protein resides in the membrane raft. Its subcellular location is the apical cell membrane. The enzyme catalyses Zn(2+)(in) = Zn(2+)(out). Zinc-influx transporter which plays a role in zinc homeostasis and in the induction of epithelial-to-mesenchymal transition (EMT). When associated with SLC39A10, the heterodimer formed by SLC39A10 and SLC39A6 mediates cellular zinc uptake to trigger cells to undergo epithelial- to-mesenchymal transition (EMT). The SLC39A10-SLC39A6 heterodimer also controls NCAM1 phosphorylation and its integration into focal adhesion complexes during EMT. Zinc influx inactivates GSK3B, enabling unphosphorylated SNAI1 in the nucleus to down-regulate adherence genes such as E-cadherin, causing loss of cell adherence. In addition, the SLC39A10-SLC39A6 heterodimer plays an essentiel role in initiating mitosis by importing zinc into cells to initiate a pathway resulting in the onset of mitosis. Participates in the T-cell receptor signaling regulation by mediating cellular zinc uptake into activated lymphocytes. Regulates the zinc influx necessary for proper meiotic progression to metaphase II (MII) that allows the oocyte-to-egg transition. In Mus musculus (Mouse), this protein is Zinc transporter ZIP6.